The chain runs to 148 residues: UPF0756 membrane protein ESA_02180 (148 aa).

4 helical membrane-spanning segments follow: residues 4–24, 51–71, 86–106, and 112–132; these read ITLL…NMAV, VTVG…SGTL, LVAI…VALM, and IVAG…GVPV.

It belongs to the UPF0756 family.

It is found in the cell membrane. The sequence is that of UPF0756 membrane protein ESA_02180 from Cronobacter sakazakii (strain ATCC BAA-894) (Enterobacter sakazakii).